The primary structure comprises 587 residues: Ran GTPase-activating protein 1 (587 aa).

Position 2 is an N-acetylalanine (Ala2). Lys8 participates in a covalent cross-link: Glycyl lysine isopeptide (Lys-Gly) (interchain with G-Cter in SUMO1); alternate. Lys8 is covalently cross-linked (Glycyl lysine isopeptide (Lys-Gly) (interchain with G-Cter in SUMO2); alternate). Residue Lys15 forms a Glycyl lysine isopeptide (Lys-Gly) (interchain with G-Cter in SUMO2) linkage. At Ser24 the chain carries Phosphoserine. LRR repeat units follow at residues 48 to 71 (FDSL…VIAK), 111 to 134 (GAQL…GFEA), 207 to 230 (IGTL…ALAQ), and 235 to 258 (NPLL…AMAE). Lys279 is covalently cross-linked (Glycyl lysine isopeptide (Lys-Gly) (interchain with G-Cter in SUMO2)). 2 LRR repeats span residues 292 to 319 (LPKL…AMAD) and 320 to 343 (KAEL…QLQE). Ser301 is subject to Phosphoserine. The segment at 357 to 430 (LSDDEDEEEE…EPAPVLSSPP (74 aa)) is disordered. Ser358 is modified (phosphoserine). Residues 358-397 (SDDEDEEEEEEGEEEEEEAEEEEEEDEEEEEEEEEEEEEE) show a composition bias toward acidic residues. Residues 400–410 (QRGQGEKSATP) are compositionally biased toward polar residues. Thr409 carries the post-translational modification Phosphothreonine; by CDK2. A phosphoserine mark is found at Ser428 and Ser435. Residue Thr436 is modified to Phosphothreonine. Residue Ser442 is modified to Phosphoserine. A Glycyl lysine isopeptide (Lys-Gly) (interchain with G-Cter in SUMO2) cross-link involves residue Lys452. The short motif at 523–526 (LKSE) is the SUMO conjugation element. A Glycyl lysine isopeptide (Lys-Gly) (interchain with G-Cter in SUMO1); alternate cross-link involves residue Lys524. A Glycyl lysine isopeptide (Lys-Gly) (interchain with G-Cter in SUMO2); alternate cross-link involves residue Lys524. Lys524 bears the N6-acetyllysine; alternate mark. Lys586 is covalently cross-linked (Glycyl lysine isopeptide (Lys-Gly) (interchain with G-Cter in SUMO2)).

Belongs to the RNA1 family. Homodimer. Interacts with RAN. Forms a complex with RANBP2/NUP358, NXF1 and NXT1. Forms a tight complex in association with RANBP2/NUP358 and UBE2I/UBC9, the ubiquitin-conjugating enzyme E2. Interacts with UBE2I; the interaction conjugates SUMO1 to RANGAP1, and subsequently stabilizes interactions of sumoylated RANGAP1 with RANBP2/NUP358. The complex composed of RANBP2, SUMO1, RANGAP1 and UBE2I associates with nuclear pore complexes. Identified in a complex composed of RAN, RANBP2, sumoylated RANGAP1, UBE2I and XPO1. Identified in a complex composed of RAN, RANGAP1 and RANBP1. Interacts with TRAF6. Interacts with SUMO1 and SENP1. Interacts (when sumoylated) with MYCBP2; interaction inhibits MYCBP2 E3 ubiquitin-protein ligase activity and promotes MYCBP2 translocation to the nucleus. Post-translationally, phosphorylation occurs before nuclear envelope breakdown and continues throughout mitosis. Phosphorylated by the M-phase kinase cyclin B/Cdk1, in vitro. Differential timimg of dephosphorylation occurs during phases of mitosis. The phosphorylated form remains associated with RANBP2/NUP358 and the SUMO E2-conjugating enzyme, UBE2I, on nuclear pore complex (NPC) diassembly and during mitosis. Sumoylated. Sumoylation is necessary for targeting to the nuclear envelope (NE), and for association with mitotic spindles and kinetochores during mitosis. Also required for interaction with RANBP2 and is mediated by UBE2I. Desumoylated by HINT1. Highly expressed in brain, thymus and testis.

The protein localises to the cytoplasm. It localises to the nucleus. Its subcellular location is the nucleoplasm. The protein resides in the nucleus envelope. It is found in the chromosome. The protein localises to the centromere. It localises to the kinetochore. Its subcellular location is the cytoskeleton. The protein resides in the spindle. Its function is as follows. GTPase activator for RAN. Converts cytoplasmic GTP-bound RAN to GDP-bound RAN, which is essential for RAN-mediated nuclear import and export. Mediates dissociation of cargo from nuclear export complexes containing XPO1, RAN and RANBP2 after nuclear export. This chain is Ran GTPase-activating protein 1 (RANGAP1), found in Homo sapiens (Human).